The primary structure comprises 365 residues: Protein-glutamate methylesterase/protein-glutamine glutaminase 2 (365 aa).

In terms of domain architecture, Response regulatory spans 18–135; it reads RVLIVDDSAM…GQGLPAIMRD (118 aa). Asp69 carries the 4-aspartylphosphate modification. In terms of domain architecture, CheB-type methylesterase spans 162 to 355; sequence GASEDWIHAL…ARMMLAAAAD (194 aa). Catalysis depends on residues Ser174, His200, and Asp297.

The protein belongs to the CheB family. In terms of processing, phosphorylated by CheA. Phosphorylation of the N-terminal regulatory domain activates the methylesterase activity.

It localises to the cytoplasm. The catalysed reaction is [protein]-L-glutamate 5-O-methyl ester + H2O = L-glutamyl-[protein] + methanol + H(+). It catalyses the reaction L-glutaminyl-[protein] + H2O = L-glutamyl-[protein] + NH4(+). Functionally, involved in chemotaxis. Part of a chemotaxis signal transduction system that modulates chemotaxis in response to various stimuli. Catalyzes the demethylation of specific methylglutamate residues introduced into the chemoreceptors (methyl-accepting chemotaxis proteins or MCP) by CheR. Also mediates the irreversible deamidation of specific glutamine residues to glutamic acid. The sequence is that of Protein-glutamate methylesterase/protein-glutamine glutaminase 2 from Cereibacter sphaeroides (strain ATCC 17023 / DSM 158 / JCM 6121 / CCUG 31486 / LMG 2827 / NBRC 12203 / NCIMB 8253 / ATH 2.4.1.) (Rhodobacter sphaeroides).